The sequence spans 476 residues: Ribosomal RNA small subunit methyltransferase F (476 aa).

S-adenosyl-L-methionine-binding positions include 124–130 (ASAPGSK), glutamate 148, aspartate 175, and aspartate 193. Cysteine 246 serves as the catalytic Nucleophile.

The protein belongs to the class I-like SAM-binding methyltransferase superfamily. RsmB/NOP family.

The protein resides in the cytoplasm. It catalyses the reaction cytidine(1407) in 16S rRNA + S-adenosyl-L-methionine = 5-methylcytidine(1407) in 16S rRNA + S-adenosyl-L-homocysteine + H(+). Functionally, specifically methylates the cytosine at position 1407 (m5C1407) of 16S rRNA. This chain is Ribosomal RNA small subunit methyltransferase F, found in Photobacterium profundum (strain SS9).